The sequence spans 318 residues: D-alanine--D-alanine ligase B (318 aa).

The 199-residue stretch at 117–315 (KQVWLSLGLS…FEALVWRVLE (199 aa)) folds into the ATP-grasp domain. 146-201 (AEQIGLPVIVKPANEGSSVGVSRVFDQAQLDEAVTLAARYDGALLMEQLIEGDELT) contacts ATP. Mg(2+)-binding residues include D268, E282, and N284.

This sequence belongs to the D-alanine--D-alanine ligase family. Mg(2+) is required as a cofactor. Mn(2+) serves as cofactor.

The protein localises to the cytoplasm. The enzyme catalyses 2 D-alanine + ATP = D-alanyl-D-alanine + ADP + phosphate + H(+). Its pathway is cell wall biogenesis; peptidoglycan biosynthesis. Its function is as follows. Cell wall formation. This Xanthomonas campestris pv. campestris (strain ATCC 33913 / DSM 3586 / NCPPB 528 / LMG 568 / P 25) protein is D-alanine--D-alanine ligase B.